A 1329-amino-acid polypeptide reads, in one-letter code: Synergin gamma (1329 aa).

A coiled-coil region spans residues 112–152; sequence MQKQFAEEQQKRFEQQQKLLEEERKRRQFEEQKQKLRLLSS. Positions 175–211 are disordered; the sequence is GFSRDAKMHPTPASHPKKPDCPTSSHSTKTVSPSSAF. The span at 197–209 shows a compositional bias: low complexity; sequence TSSHSTKTVSPSS. The EH domain maps to 393–504; it reads NESLVPDAYK…TPVSQPTAMT (112 aa). Residues 555-559 carry the DFXDF motif 1 motif; it reads DFQDF. Ser-571 is modified (phosphoserine). Residues 578-594 show a composition bias toward polar residues; that stretch reads VPASSKTSNSQHGNSAP. A disordered region spans residues 578 to 600; it reads VPASSKTSNSQHGNSAPSLLIPL. N6-acetyllysine is present on Lys-609. The segment at 614–878 is interaction with AP1G1; it reads KGISAEKPSE…ADFHSSKFSS (265 aa). 2 disordered regions span residues 661–701 and 730–753; these read GTDD…TQTQ and AFST…PASL. Ser-676 is modified (phosphoserine). The interval 761-773 is interaction with AP1G1, AP1G2 and GGA1; it reads LADDFGEFNLFGE. Positions 785 to 789 match the DFXDF motif 2 motif; sequence DFADF. The segment at 797 to 835 is disordered; that stretch reads IPSEPKADDKYEALREEGSPGALSTSTVEGAHNPPVSSS. Residues 801–814 show a composition bias toward basic and acidic residues; it reads PKADDKYEALREEG. Ser-815 bears the Phosphoserine mark. N6-acetyllysine is present on Lys-836. Phosphoserine occurs at positions 844 and 864. Disordered regions lie at residues 856–922, 941–1042, and 1088–1113; these read KENT…DSED, HVMS…FGEF, and SLSL…RDRS. The segment covering 864 to 873 has biased composition (basic and acidic residues); sequence SDGDFADFHS. The DFXDF motif 3 motif lies at 867–871; the sequence is DFADF. A compositionally biased stretch (low complexity) spans 874-883; sequence SKFSSTSSDK. Ser-904, Ser-944, Ser-947, Ser-997, Ser-1021, Ser-1088, Ser-1090, Ser-1102, and Ser-1113 each carry phosphoserine. Residues 944-955 show a composition bias toward polar residues; the sequence is SDSSLDLPTVSG. Residues 1016 to 1028 show a composition bias toward polar residues; it reads ENTCPSPASSVAS. Position 1115 is a phosphothreonine (Thr-1115).

As to quaternary structure, self-associates. Interacts with GGA1 (via GAE domain). Interacts with GGA2 and GGA3. Interacts with AP1G1 (via GAE domain), a subunit of adapter protein complex AP-1. Interacts with AP1G2 (via GAE domain) a subunit of adapter protein complex AP-1. Component of the aftiphilin/p200/gamma-synergin complex, at least composed of AFTPH/aftiphilin, HEATR5B/p200a and SYNRG/gamma-synergin, which plays a role in the AP1G1/AP-1-mediated trafficking of transferrin from early to recycling endosomes. Within the complex interacts with AFTPH/aftiphilin and HEATR5B/p200a; the interactions are direct. Interacts (via EH domain) with SCAMP1. As to expression, detected in brain and liver (at protein level). Ubiquitously expressed.

The protein localises to the cytoplasm. It localises to the golgi apparatus. The protein resides in the trans-Golgi network membrane. Its subcellular location is the perinuclear region. It is found in the cytoplasmic vesicle. The protein localises to the clathrin-coated vesicle. Its function is as follows. Plays a role in endocytosis and/or membrane trafficking at the trans-Golgi network (TGN). May act by linking the adapter protein complex AP-1 to other proteins. Component of clathrin-coated vesicles. Component of the aftiphilin/p200/gamma-synergin complex, which plays roles in AP1G1/AP-1-mediated protein trafficking including the trafficking of transferrin from early to recycling endosomes, and the membrane trafficking of furin and the lysosomal enzyme cathepsin D between the trans-Golgi network (TGN) and endosomes. This Rattus norvegicus (Rat) protein is Synergin gamma (Synrg).